Consider the following 273-residue polypeptide: Transposon Tn7 transposition protein TnsA (273 aa).

Active-site residues include Glu-63 and Glu-73. Residues 90–108 (TRQIAIDSGIKHPVIRGVD) constitute a DNA-binding region (H-T-H motif). Asp-114 is a catalytic residue. Asp-114, Gln-130, and Val-131 together coordinate Mg(2+). Lys-132 is a catalytic residue.

As to quaternary structure, heteromer with TnsB. Interacts with TnsC (via C-terminus); this interaction allows TnsA to bind donor DNA. It depends on Mg(2+) as a cofactor. Requires Mn(2+) as cofactor.

Functionally, required for Tn7 transposition. Forms the transposase, together with TnsB. TnsA executes the 5'-DNA strand breakage reaction. TnsABC and TnsD promote high-frequency insertion of Tn7 into a specific target site known as att-Tn7 whereas TnsABC and TnsE promote low-frequency insertion into many different sites. This chain is Transposon Tn7 transposition protein TnsA, found in Escherichia coli.